Here is a 372-residue protein sequence, read N- to C-terminus: Fatty acid 2-hydroxylase (372 aa).

Positions 8 to 86 (AASFTSAEVQ…LEQYYVGELR (79 aa)) constitute a Cytochrome b5 heme-binding domain. Heme-binding residues include His43 and His69. 2 consecutive transmembrane segments (helical) span residues 168–188 (VWYS…WSYY) and 213–233 (SVFI…EYLI). One can recognise a Fatty acid hydroxylase domain in the interval 219–361 (FVLGMLIWTL…TKLWDYFFHT (143 aa)). Residues His234, His239, His257, His260, and His261 each coordinate Zn(2+). 2 consecutive transmembrane segments (helical) span residues 268–288 (SRLV…YVFL) and 290–310 (LILP…GYVL). Zn(2+) is bound by residues His315, His319, His336, His339, and His340.

It belongs to the sterol desaturase family. SCS7 subfamily. Zn(2+) is required as a cofactor. As to expression, detected in oligodendrocytes (at protein level). Detected in sciatic nerve.

Its subcellular location is the endoplasmic reticulum membrane. It is found in the microsome membrane. It carries out the reaction a 1,2-saturated fatty acid + 2 Fe(II)-[cytochrome b5] + O2 + 2 H(+) = a (R)-2-hydroxy fatty acid + 2 Fe(III)-[cytochrome b5] + H2O. The enzyme catalyses hexadecanoate + 2 Fe(II)-[cytochrome b5] + O2 + 2 H(+) = (R)-2-hydroxyhexadecanoate + 2 Fe(III)-[cytochrome b5] + H2O. It catalyses the reaction octadecanoate + 2 Fe(II)-[cytochrome b5] + O2 + 2 H(+) = (R)-2-hydroxyoctadecanoate + 2 Fe(III)-[cytochrome b5] + H2O. The catalysed reaction is docosanoate + 2 Fe(II)-[cytochrome b5] + O2 + 2 H(+) = 2-hydroxydocosanoate + 2 Fe(III)-[cytochrome b5] + H2O. It carries out the reaction tetracosanoate + 2 Fe(II)-[cytochrome b5] + O2 + 2 H(+) = (R)-2-hydroxytetracosanoate + 2 Fe(III)-[cytochrome b5] + H2O. The protein operates within lipid metabolism; fatty acid metabolism. It participates in sphingolipid metabolism; galactosylceramide biosynthesis. Functionally, catalyzes the hydroxylation of free fatty acids at the C-2 position to produce 2-hydroxy fatty acids, which are building blocks of sphingolipids and glycosphingolipids common in neural tissue and epidermis. FA2H is stereospecific for the production of (R)-2-hydroxy fatty acids. Plays an essential role in the synthesis of galactosphingolipids of the myelin sheath. Responsible for the synthesis of sphingolipids and glycosphingolipids involved in the formation of epidermal lamellar bodies critical for skin permeability barrier. Participates in the synthesis of glycosphingolipids and a fraction of type II wax diesters in sebaceous gland, specifically regulating hair follicle homeostasis. Involved in the synthesis of sphingolipids of plasma membrane rafts, controlling lipid raft mobility and trafficking of raft-associated proteins. In Rattus norvegicus (Rat), this protein is Fatty acid 2-hydroxylase.